The primary structure comprises 288 residues: Stage IV sporulation protein FB (288 aa).

Topologically, residues 1 to 10 (MNKWLDLILK) are mother cell cytoplasmic. The helical transmembrane segment at 11–30 (IHVHPFLWIIAALGLLTGHM) threads the bilayer. K31 is a topological domain (forespore intermembrane space). Residues 32-56 (ALLCLLLIVLIHELGHAALAVFFSW) traverse the membrane as a helical segment. Position 43 (H43) interacts with Zn(2+). E44 is a catalytic residue. H47 is a binding site for Zn(2+). Residues 57-83 (RIKRVFLLPFGGTVEVEEHGNRPLKEE) lie on the Mother cell cytoplasmic side of the membrane. Residues 84-105 (FAVIIAGPLQHIWLQFAAWMLA) traverse the membrane as a helical segment. The Forespore intermembrane space portion of the chain corresponds to 106 to 126 (EVSVIHQHTFELFTFYNLSIL). Residues 127-146 (FVNLLPIWPLDGGKLLFLLF) traverse the membrane as a helical segment. D137 is a Zn(2+) binding site. The Mother cell cytoplasmic segment spans residues 147-161 (SKQLPFQKAHRLNLK). The chain crosses the membrane as a helical span at residues 162–178 (TSLCFCLLLGCWVLFVI). Position 179 (P179) is a topological domain, forespore intermembrane space. Residues 180 to 199 (LQISAWVLFVFLAVSLFEEY) traverse the membrane as a helical segment. Residues 200–288 (RQRHYIHVRF…SSMEELLLPY (89 aa)) are Mother cell cytoplasmic-facing.

The protein belongs to the peptidase M50B family. Forms a complex with SpoIVFA and BofA localized in the mother-cell membrane surrounding the forespore. Zn(2+) serves as cofactor.

The protein localises to the forespore outer membrane. Functionally, implicated in the coupling of mother cell to forespore gene expression. Required for spore formation. Processes the pro-sigma K factor. The sequence is that of Stage IV sporulation protein FB (spoIVFB) from Bacillus subtilis (strain 168).